Consider the following 704-residue polypeptide: Elongation factor G (704 aa).

In terms of domain architecture, tr-type G spans 8 to 291 (VRYRNIGISA…AVVEYLPSPS (284 aa)). GTP-binding positions include 17–24 (AHIDAGKT), 88–92 (DTPGH), and 142–145 (NKMD).

The protein belongs to the TRAFAC class translation factor GTPase superfamily. Classic translation factor GTPase family. EF-G/EF-2 subfamily.

It is found in the cytoplasm. In terms of biological role, catalyzes the GTP-dependent ribosomal translocation step during translation elongation. During this step, the ribosome changes from the pre-translocational (PRE) to the post-translocational (POST) state as the newly formed A-site-bound peptidyl-tRNA and P-site-bound deacylated tRNA move to the P and E sites, respectively. Catalyzes the coordinated movement of the two tRNA molecules, the mRNA and conformational changes in the ribosome. The protein is Elongation factor G of Blochmanniella pennsylvanica (strain BPEN).